A 155-amino-acid chain; its full sequence is Large ribosomal subunit protein uL11 (155 aa).

It belongs to the universal ribosomal protein uL11 family. As to quaternary structure, part of the ribosomal stalk of the 50S ribosomal subunit. Interacts with L10 and the large rRNA to form the base of the stalk. L10 forms an elongated spine to which L12 dimers bind in a sequential fashion forming a multimeric L10(L12)X complex. In terms of processing, one or more lysine residues are methylated.

Forms part of the ribosomal stalk which helps the ribosome interact with GTP-bound translation factors. This is Large ribosomal subunit protein uL11 from Malacoplasma penetrans (strain HF-2) (Mycoplasma penetrans).